A 285-amino-acid polypeptide reads, in one-letter code: Pantothenate synthetase (285 aa).

An ATP-binding site is contributed by 30–37; the sequence is MGYLHEGH. The Proton donor role is filled by His37. A (R)-pantoate-binding site is contributed by Gln61. Beta-alanine is bound at residue Gln61. 148–151 is a binding site for ATP; it reads GKKD. Residue Gln154 coordinates (R)-pantoate. ATP-binding positions include Ile177 and 185-188; that span reads LSSR.

It belongs to the pantothenate synthetase family. Homodimer.

Its subcellular location is the cytoplasm. It catalyses the reaction (R)-pantoate + beta-alanine + ATP = (R)-pantothenate + AMP + diphosphate + H(+). It participates in cofactor biosynthesis; (R)-pantothenate biosynthesis; (R)-pantothenate from (R)-pantoate and beta-alanine: step 1/1. In terms of biological role, catalyzes the condensation of pantoate with beta-alanine in an ATP-dependent reaction via a pantoyl-adenylate intermediate. This Leptospira borgpetersenii serovar Hardjo-bovis (strain JB197) protein is Pantothenate synthetase.